A 211-amino-acid chain; its full sequence is Histidine biosynthesis bifunctional protein HisIE (211 aa).

Residues 1–107 (MNKLIDFSKG…FNSEIESRFK (107 aa)) form a phosphoribosyl-AMP cyclohydrolase region. The tract at residues 108-211 (IQALAQTIHQ…KGERKEVREW (104 aa)) is phosphoribosyl-ATP pyrophosphohydrolase.

The protein in the N-terminal section; belongs to the PRA-CH family. This sequence in the C-terminal section; belongs to the PRA-PH family.

The protein resides in the cytoplasm. The enzyme catalyses 1-(5-phospho-beta-D-ribosyl)-ATP + H2O = 1-(5-phospho-beta-D-ribosyl)-5'-AMP + diphosphate + H(+). The catalysed reaction is 1-(5-phospho-beta-D-ribosyl)-5'-AMP + H2O = 1-(5-phospho-beta-D-ribosyl)-5-[(5-phospho-beta-D-ribosylamino)methylideneamino]imidazole-4-carboxamide. The protein operates within amino-acid biosynthesis; L-histidine biosynthesis; L-histidine from 5-phospho-alpha-D-ribose 1-diphosphate: step 2/9. Its pathway is amino-acid biosynthesis; L-histidine biosynthesis; L-histidine from 5-phospho-alpha-D-ribose 1-diphosphate: step 3/9. In Staphylococcus epidermidis (strain ATCC 35984 / DSM 28319 / BCRC 17069 / CCUG 31568 / BM 3577 / RP62A), this protein is Histidine biosynthesis bifunctional protein HisIE.